Here is a 393-residue protein sequence, read N- to C-terminus: NAD(P)H-quinone oxidoreductase subunit H, chloroplastic (393 aa).

Belongs to the complex I 49 kDa subunit family. In terms of assembly, NDH is composed of at least 16 different subunits, 5 of which are encoded in the nucleus.

It localises to the plastid. The protein localises to the chloroplast thylakoid membrane. It carries out the reaction a plastoquinone + NADH + (n+1) H(+)(in) = a plastoquinol + NAD(+) + n H(+)(out). It catalyses the reaction a plastoquinone + NADPH + (n+1) H(+)(in) = a plastoquinol + NADP(+) + n H(+)(out). Functionally, NDH shuttles electrons from NAD(P)H:plastoquinone, via FMN and iron-sulfur (Fe-S) centers, to quinones in the photosynthetic chain and possibly in a chloroplast respiratory chain. The immediate electron acceptor for the enzyme in this species is believed to be plastoquinone. Couples the redox reaction to proton translocation, and thus conserves the redox energy in a proton gradient. This chain is NAD(P)H-quinone oxidoreductase subunit H, chloroplastic, found in Lotus japonicus (Lotus corniculatus var. japonicus).